Consider the following 270-residue polypeptide: Thiosulfate dehydrogenase (270 aa).

Positions 1 to 27 are cleaved as a signal peptide; the sequence is MRGDVRVHTASPIAAAWLLAVGLVAHA. Cytochrome c domains follow at residues 44–158 and 174–260; these read PDGA…PVGA and PDGV…LTHP. Heme c is bound by residues Cys-76, Cys-79, His-80, Cys-187, Cys-190, and His-191.

Monomer. In terms of processing, binds 2 heme c groups covalently per subunit.

It is found in the periplasm. It carries out the reaction 2 thiosulfate + 2 Fe(III)-[cytochrome c] = tetrathionate + 2 Fe(II)-[cytochrome c] + 2 H(+). Its function is as follows. Catalyzes the oxidation of 2 molecules of thiosulfate to tetrathionate. This is Thiosulfate dehydrogenase (tsdA) from Allochromatium vinosum (strain ATCC 17899 / DSM 180 / NBRC 103801 / NCIMB 10441 / D) (Chromatium vinosum).